A 459-amino-acid polypeptide reads, in one-letter code: RuvB-like helicase 1 (459 aa).

Gly-75 to Thr-82 is a binding site for ATP.

This sequence belongs to the RuvB family. In terms of assembly, may form heterododecamers with RVB2. Component of the SWR1 chromatin remodeling complex, the INO80 chromatin remodeling complex, and of the R2TP complex.

It localises to the nucleus. The enzyme catalyses ATP + H2O = ADP + phosphate + H(+). Functionally, DNA helicase which participates in several chromatin remodeling complexes, including the SWR1 and the INO80 complexes. The SWR1 complex mediates the ATP-dependent exchange of histone H2A for the H2A variant HZT1 leading to transcriptional regulation of selected genes by chromatin remodeling. The INO80 complex remodels chromatin by shifting nucleosomes and is involved in DNA repair. Also involved in pre-rRNA processing. The sequence is that of RuvB-like helicase 1 (RVB1) from Eremothecium gossypii (strain ATCC 10895 / CBS 109.51 / FGSC 9923 / NRRL Y-1056) (Yeast).